The chain runs to 661 residues: Acetyl-coenzyme A synthetase (661 aa).

CoA contacts are provided by residues 199–202 (RGGK) and threonine 317. ATP is bound by residues 393–395 (GEP), 417–422 (DTFWQT), aspartate 508, and arginine 523. Serine 531 lines the CoA pocket. Arginine 534 lines the ATP pocket. Position 596 (arginine 596) interacts with CoA.

The protein belongs to the ATP-dependent AMP-binding enzyme family.

The enzyme catalyses acetate + ATP + CoA = acetyl-CoA + AMP + diphosphate. The sequence is that of Acetyl-coenzyme A synthetase (ACS-1) from Coprinopsis cinerea (Inky cap fungus).